The following is a 147-amino-acid chain: MKTLFLLALLALVASTTSAQYSVGGGYNDVGGGGGSQQCPQERPNLGSCKDYVMERCFTMKDFPVTWPTKWWKGGCEHEVREKCCQQLSQIAPHCRCDAIRGVIQGKLGGIFGIGGGAVFKQIQRAQILPSKCNMGVDCRFPSGYYW.

An N-terminal signal peptide occupies residues 1–19 (MKTLFLLALLALVASTTSA). Residues 20–28 (QYSVGGGYN) constitute a propeptide that is removed on maturation.

Five disulfide bonds are present. Found in endosperm and aleurone layer of developing kernels, but not in the embryo.

It localises to the membrane. The protein resides in the secreted. It is found in the extracellular space. Its function is as follows. Acts as a membranotoxin, probably through its antibacterial and antifungal activities, contributing to the defense mechanism of the plant against predators. Forms monovalent cation-selective ion channels in membranes. Contributes to grain texture and hardness. This Hordeum vulgare (Barley) protein is Hordoindoline-B2 (HINB-2).